A 133-amino-acid chain; its full sequence is Fluoride-specific ion channel FluC (133 aa).

4 helical membrane passes run V5–L25, V43–I63, V76–L96, and I108–L128. G83 and T86 together coordinate Na(+).

The protein belongs to the fluoride channel Fluc/FEX (TC 1.A.43) family.

The protein resides in the cell inner membrane. It catalyses the reaction fluoride(in) = fluoride(out). Its activity is regulated as follows. Na(+) is not transported, but it plays an essential structural role and its presence is essential for fluoride channel function. Its function is as follows. Fluoride-specific ion channel. Important for reducing fluoride concentration in the cell, thus reducing its toxicity. This is Fluoride-specific ion channel FluC from Saccharophagus degradans (strain 2-40 / ATCC 43961 / DSM 17024).